We begin with the raw amino-acid sequence, 746 residues long: Probable ubiquitin carboxyl-terminal hydrolase MINDY-4 (746 aa).

Disordered stretches follow at residues 123 to 179, 198 to 254, and 319 to 342; these read DDET…SEGE, MALG…IKGE, and GKGA…FSNM. Composition is skewed to polar residues over residues 141–152 and 165–174; these read YRSQNDLQFNKS and TEAGVTSTGV. Catalysis depends on cysteine 448, which acts as the Nucleophile. Histidine 666 serves as the catalytic Proton acceptor.

This sequence belongs to the MINDY deubiquitinase family. FAM188 subfamily.

The catalysed reaction is Thiol-dependent hydrolysis of ester, thioester, amide, peptide and isopeptide bonds formed by the C-terminal Gly of ubiquitin (a 76-residue protein attached to proteins as an intracellular targeting signal).. Functionally, probable hydrolase that can remove 'Lys-48'-linked conjugated ubiquitin from proteins. In Xenopus tropicalis (Western clawed frog), this protein is Probable ubiquitin carboxyl-terminal hydrolase MINDY-4 (mindy4).